A 150-amino-acid polypeptide reads, in one-letter code: Large ribosomal subunit protein bL9 (150 aa).

It belongs to the bacterial ribosomal protein bL9 family.

In terms of biological role, binds to the 23S rRNA. In Pectobacterium atrosepticum (strain SCRI 1043 / ATCC BAA-672) (Erwinia carotovora subsp. atroseptica), this protein is Large ribosomal subunit protein bL9.